The following is a 565-amino-acid chain: NAD-dependent malic enzyme (565 aa).

The active-site Proton donor is Y104. R157 provides a ligand contact to NAD(+). K175 (proton acceptor) is an active-site residue. Residues E246, D247, and D270 each contribute to the a divalent metal cation site. D270 and N418 together coordinate NAD(+).

It belongs to the malic enzymes family. In terms of assembly, homotetramer. Mg(2+) serves as cofactor. Mn(2+) is required as a cofactor.

The catalysed reaction is (S)-malate + NAD(+) = pyruvate + CO2 + NADH. It catalyses the reaction oxaloacetate + H(+) = pyruvate + CO2. In Serratia proteamaculans (strain 568), this protein is NAD-dependent malic enzyme.